The following is a 157-amino-acid chain: Small ribosomal subunit protein uS7 (157 aa).

The protein belongs to the universal ribosomal protein uS7 family. In terms of assembly, part of the 30S ribosomal subunit. Contacts proteins S9 and S11.

In terms of biological role, one of the primary rRNA binding proteins, it binds directly to 16S rRNA where it nucleates assembly of the head domain of the 30S subunit. Is located at the subunit interface close to the decoding center, probably blocks exit of the E-site tRNA. This Chlamydia abortus (strain DSM 27085 / S26/3) (Chlamydophila abortus) protein is Small ribosomal subunit protein uS7.